The sequence spans 75 residues: uncharacterized protein (75 aa).

The first 26 residues, 1–26 (MQFLERHFSVLFPVLFFFSFYPISFA), serve as a signal peptide directing secretion.

It is found in the secreted. This is an uncharacterized protein from Schizosaccharomyces pombe (strain 972 / ATCC 24843) (Fission yeast).